Consider the following 435-residue polypeptide: NADH-quinone oxidoreductase subunit D (435 aa).

It belongs to the complex I 49 kDa subunit family. As to quaternary structure, NDH-1 is composed of 14 different subunits. Subunits NuoB, C, D, E, F, and G constitute the peripheral sector of the complex.

The protein localises to the cell inner membrane. The enzyme catalyses a quinone + NADH + 5 H(+)(in) = a quinol + NAD(+) + 4 H(+)(out). Functionally, NDH-1 shuttles electrons from NADH, via FMN and iron-sulfur (Fe-S) centers, to quinones in the respiratory chain. The immediate electron acceptor for the enzyme in this species is believed to be ubiquinone. Couples the redox reaction to proton translocation (for every two electrons transferred, four hydrogen ions are translocated across the cytoplasmic membrane), and thus conserves the redox energy in a proton gradient. The chain is NADH-quinone oxidoreductase subunit D from Xanthomonas euvesicatoria pv. vesicatoria (strain 85-10) (Xanthomonas campestris pv. vesicatoria).